The sequence spans 338 residues: Lipoate-protein ligase A (338 aa).

One can recognise a BPL/LPL catalytic domain in the interval 29–216 (SPNQRVLFLW…AFFAYYDEQV (188 aa)). ATP contacts are provided by residues arginine 71, 76 to 79 (GAVF), and lysine 134. Residue lysine 134 coordinates (R)-lipoate.

This sequence belongs to the LplA family. Monomer.

Its subcellular location is the cytoplasm. The enzyme catalyses L-lysyl-[lipoyl-carrier protein] + (R)-lipoate + ATP = N(6)-[(R)-lipoyl]-L-lysyl-[lipoyl-carrier protein] + AMP + diphosphate + H(+). It functions in the pathway protein modification; protein lipoylation via exogenous pathway; protein N(6)-(lipoyl)lysine from lipoate: step 1/2. The protein operates within protein modification; protein lipoylation via exogenous pathway; protein N(6)-(lipoyl)lysine from lipoate: step 2/2. Functionally, catalyzes both the ATP-dependent activation of exogenously supplied lipoate to lipoyl-AMP and the transfer of the activated lipoyl onto the lipoyl domains of lipoate-dependent enzymes. This is Lipoate-protein ligase A from Yersinia pseudotuberculosis serotype O:1b (strain IP 31758).